An 862-amino-acid polypeptide reads, in one-letter code: Alanine--tRNA ligase (862 aa).

4 residues coordinate Zn(2+): His552, His556, Cys653, and His657.

The protein belongs to the class-II aminoacyl-tRNA synthetase family. Zn(2+) is required as a cofactor.

The protein resides in the cytoplasm. The catalysed reaction is tRNA(Ala) + L-alanine + ATP = L-alanyl-tRNA(Ala) + AMP + diphosphate. Its function is as follows. Catalyzes the attachment of alanine to tRNA(Ala) in a two-step reaction: alanine is first activated by ATP to form Ala-AMP and then transferred to the acceptor end of tRNA(Ala). Also edits incorrectly charged Ser-tRNA(Ala) and Gly-tRNA(Ala) via its editing domain. This is Alanine--tRNA ligase from Nitrosospira multiformis (strain ATCC 25196 / NCIMB 11849 / C 71).